Consider the following 246-residue polypeptide: 3-deoxy-manno-octulosonate cytidylyltransferase (246 aa).

The protein belongs to the KdsB family.

The protein resides in the cytoplasm. It catalyses the reaction 3-deoxy-alpha-D-manno-oct-2-ulosonate + CTP = CMP-3-deoxy-beta-D-manno-octulosonate + diphosphate. The protein operates within nucleotide-sugar biosynthesis; CMP-3-deoxy-D-manno-octulosonate biosynthesis; CMP-3-deoxy-D-manno-octulosonate from 3-deoxy-D-manno-octulosonate and CTP: step 1/1. Its pathway is bacterial outer membrane biogenesis; lipopolysaccharide biosynthesis. Its function is as follows. Activates KDO (a required 8-carbon sugar) for incorporation into bacterial lipopolysaccharide in Gram-negative bacteria. The chain is 3-deoxy-manno-octulosonate cytidylyltransferase from Chloroherpeton thalassium (strain ATCC 35110 / GB-78).